Here is a 638-residue protein sequence, read N- to C-terminus: MESHGKTHQKEHDNDLSPKPITLSKYSKRVELKTLLDRSDRGAGLAGKRVVIGGWVKSARAVKKNSPPPPLPVVAAPSPSSGGDQAHTTANIRCTEIIQSKMNIFKRFFDVLSGGGKTYPIFDKTELAGQKAVPPPEYVFYFLISDGSSISSLQVVVDSALSTVPATQLMALGTCIVAEGVLRLPLAASAKHVIELEAEKLLHVGTVDPEKYPLSKKQLPLHMLRDFSHFRPRTTTVGSVTRVHSALTLASHTFLQYHGFQYVQVPVITTTTGFGEMFRVTTLLGKTDDKEEKKPPVQEKDGFSIDTVKAVIKEKTRLIDHLKRSDSNRETVVAAVHDLKKTNDLASQIEMKQKSKTGTLVKPEKLDFSKDFFGRDTYLTASGRFHLESYASALGKVYTFGPRFIADKIDNARHLAEKWNVETEMAFAELDDAMDCADEYFKFLCKYVLENRDEDMKFISKRVDKTITTRLEATASSSLLRFSYTEVISLLQKATTTKFETKPEWGVALTTEHLSYLTDEIYKGPVIVHTYPKAIKQFYVRLNDDKKTVAAFDLVVPKVGVVITGSQNEERFEILDARIGESGFTREKFEWYLDLRRHGTVKHSGISLSMEQMLLYATGLPDIKDAIPFPRSWGKANN.

The segment covering M1–L16 has biased composition (basic and acidic residues). Disordered regions lie at residues M1–L23 and V62–H87.

Belongs to the class-II aminoacyl-tRNA synthetase family.

The protein resides in the cytoplasm. It localises to the cytosol. It carries out the reaction tRNA(Asn) + L-asparagine + ATP = L-asparaginyl-tRNA(Asn) + AMP + diphosphate + H(+). This Arabidopsis thaliana (Mouse-ear cress) protein is Asparagine--tRNA ligase, cytoplasmic 2.